The primary structure comprises 158 residues: MSNVFTHINADGNAHMVDVTEKAVTEREARAEAFIEMASTTLEMIMSGSHHKGDVFATARIAGIQAAKKTSDLIPLCHPLMLTKVEVDLEAQPEHNRVRITSLCKLSGKTGVEMEALTAASVAALTIYDMCKAVQKDMVISQVRLLEKRGGKSGHFKV.

Residues L76–H78 and M114–E115 contribute to the substrate site. D129 is a catalytic residue.

Belongs to the MoaC family. In terms of assembly, homohexamer; trimer of dimers.

The enzyme catalyses (8S)-3',8-cyclo-7,8-dihydroguanosine 5'-triphosphate = cyclic pyranopterin phosphate + diphosphate. The protein operates within cofactor biosynthesis; molybdopterin biosynthesis. Its function is as follows. Catalyzes the conversion of (8S)-3',8-cyclo-7,8-dihydroguanosine 5'-triphosphate to cyclic pyranopterin monophosphate (cPMP). This is Cyclic pyranopterin monophosphate synthase from Shewanella baltica (strain OS155 / ATCC BAA-1091).